The chain runs to 232 residues: Probable dihydroorotate dehydrogenase B (NAD(+)), electron transfer subunit (232 aa).

An FAD-binding FR-type domain is found at 1 to 86 (MYYTRITQIE…RGAFGSAFTP (86 aa)). 4 residues coordinate [2Fe-2S] cluster: Cys202, Cys207, Cys210, and Cys219.

This sequence belongs to the PyrK family. Heterotetramer of 2 PyrK and 2 PyrD type B subunits. [2Fe-2S] cluster serves as cofactor. It depends on FAD as a cofactor.

Its pathway is pyrimidine metabolism; UMP biosynthesis via de novo pathway; orotate from (S)-dihydroorotate (NAD(+) route): step 1/1. In terms of biological role, responsible for channeling the electrons from the oxidation of dihydroorotate from the FMN redox center in the PyrD type B subunit to the ultimate electron acceptor NAD(+). This chain is Probable dihydroorotate dehydrogenase B (NAD(+)), electron transfer subunit, found in Archaeoglobus fulgidus (strain ATCC 49558 / DSM 4304 / JCM 9628 / NBRC 100126 / VC-16).